The primary structure comprises 265 residues: MKKEVCSVAFFKAVFAEFLATLIFVFFGLGSALKWPSALPTILQISIAFGLAIGTLAQALGPVSGGHINPAITLALLIGNQISLLRAIFYVAAQLVGAIAGAGILYWLAPGNARGNLAVNALSNNTTPGKAVVVELILTFQLALCIFSSTDSRRTSPVGSPALSIGLSVTLGHLVGIYFTGCSMNPARSFGPAVVMNRFSPSHWVFWVGPIVGAVLAAILYFYLLFPSSLSLHDRVAVVKGTYEPEEDWEDHREERKKTIELTAH.

Topologically, residues 1–12 (MKKEVCSVAFFK) are cytoplasmic. The chain crosses the membrane as a helical span at residues 13–33 (AVFAEFLATLIFVFFGLGSAL). At 34-39 (KWPSAL) the chain is on the extracellular side. Residues 40-60 (PTILQISIAFGLAIGTLAQAL) form a helical membrane-spanning segment. Residues 61 to 65 (GPVSG) are Cytoplasmic-facing. An intramembrane region (discontinuously helical) is located at residues 66 to 74 (GHINPAITL). Residues 69 to 71 (NPA) carry the NPA 1 motif. The Cytoplasmic segment spans residues 75-87 (ALLIGNQISLLRA). The chain crosses the membrane as a helical span at residues 88 to 108 (IFYVAAQLVGAIAGAGILYWL). Residues 109–126 (APGNARGNLAVNALSNNT) lie on the Extracellular side of the membrane. N124 is a glycosylation site (N-linked (GlcNAc...) asparagine). A helical membrane pass occupies residues 127-147 (TPGKAVVVELILTFQLALCIF). The Cytoplasmic portion of the chain corresponds to 148–158 (SSTDSRRTSPV). The helical transmembrane segment at 159–179 (GSPALSIGLSVTLGHLVGIYF) threads the bilayer. Position 180 (T180) is a topological domain, extracellular. Residues 181-191 (GCSMNPARSFG) constitute an intramembrane region (discontinuously helical). An NPA 2 motif is present at residues 185-187 (NPA). Over 192–203 (PAVVMNRFSPSH) the chain is Extracellular. The chain crosses the membrane as a helical span at residues 204 to 224 (WVFWVGPIVGAVLAAILYFYL). The Cytoplasmic portion of the chain corresponds to 225–265 (LFPSSLSLHDRVAVVKGTYEPEEDWEDHREERKKTIELTAH).

This sequence belongs to the MIP/aquaporin (TC 1.A.8) family. Homotetramer; each monomer provides an independent water pore. Interacts with TRPV4; the interaction is probably indirect and regulates TRPV4 activation by hypotonicity. In terms of tissue distribution, detected at the luminal membrane of secretory epithelial cells in hindpaw sweat glands. Detected in acinar cells in salivary glands, in duct cells in lacrimal glands and in lung (at protein level). Detected in lung, parotid, submandibular, sublingual, and lacrimal gland tissues.

It is found in the apical cell membrane. The protein resides in the cell membrane. It localises to the cytoplasmic vesicle membrane. It carries out the reaction H2O(in) = H2O(out). Aquaporins form homotetrameric transmembrane channels, with each monomer independently mediating water transport across the plasma membrane along its osmotic gradient. Plays an important role in fluid secretion in salivary glands. Required for TRPV4 activation by hypotonicity. Together with TRPV4, controls regulatory volume decrease in salivary epithelial cells. Seems to play a redundant role in water transport in the eye, lung and in sweat glands. The chain is Aquaporin-5 from Mus musculus (Mouse).